A 360-amino-acid polypeptide reads, in one-letter code: Meiosis-inducing protein 1 (360 aa).

The segment at 102 to 135 is disordered; sequence SKETKTTKDCTMATGPERGKKSSESTRSSSLSSL. Low complexity predominate over residues 126–135; the sequence is STRSSSLSSL.

As to quaternary structure, interacts with UME6.

The protein localises to the nucleus. Transcription factor required for sporulation and for early sporulation-specific genes expression. Positive regulator of SME1/IME2 expression. Directly activates expression of SLZ1 during meiosis. The chain is Meiosis-inducing protein 1 (IME1) from Saccharomyces cerevisiae (strain ATCC 204508 / S288c) (Baker's yeast).